Consider the following 551-residue polypeptide: Transcription factor 7-like 1-B (551 aa).

The segment covering 1 to 11 (MPQLNGGGGDE) has biased composition (gly residues). Disordered regions lie at residues 1 to 76 (MPQL…DLES), 298 to 326 (QEPNGELSPPVNTKSPGPNKKDEDKKPHI), and 392 to 525 (GWSA…PPSP). A compositionally biased stretch (basic and acidic residues) spans 19 to 32 (ISFKDEGEQEDKIS). The segment covering 46–61 (SSLVSESENNSSSSDS) has biased composition (low complexity). The span at 63–76 (QTERRPQPRADLES) shows a compositional bias: basic and acidic residues. The HMG box DNA-binding region spans 326–394 (IKKPLNAFML…LHSQLYPGWS (69 aa)). Residues 449–468 (SPATPSAALASPAAPAATHS) show a composition bias toward low complexity. Positions 469–478 (EQAQPLSLTT) are enriched in polar residues. The segment covering 493–505 (SSSSSSSSSSSGL) has biased composition (low complexity).

It belongs to the TCF/LEF family. Interacts with ctnnb1.

Its subcellular location is the nucleus. Its function is as follows. Participates in the Wnt signaling pathway. Probably binds to DNA and acts as a repressor in the absence of ctnnb1, and possibly as an activator in its presence. Regulates anterior-posterior patterning in the neuroectoderm by repressing posterior neural fates. Also required for hindbrain morphogenesis. This Danio rerio (Zebrafish) protein is Transcription factor 7-like 1-B (tcf7l1b).